A 353-amino-acid polypeptide reads, in one-letter code: MSSAFRTVWWEAGQVCLIDQRLLPNETRIVRCAAVEDVAYAIRTMQIRGAPAIGCAAAYGMALAACSAAHDAVGDVARIYARLAEAKALLDAQRPTAVNLSWATRRVLERAQSLNDPSPHDVAQRVLEEAHAILAEDLAMCHAIGRHGVALIPPRGHVLTHCNAGGLATAGYGTALAPVRTAHEQGRPIHVYVDETRPFLQGARLTAWELIQERIPLTLITDNMAGYFMKRGDIDCVIVGADRIVANGDVANKIGTYSLAVLARAHRIPFYVAAPSSTIDCSLPNGDAIPIEERSSDEVTMLFGRRIAPEGVIAAHPAFDVTPADLVTAIITECGVIYPPFAGALQRSGPKRH.

Substrate contacts are provided by residues 48–50 (RGA), arginine 94, and glutamine 201. Aspartate 242 functions as the Proton donor in the catalytic mechanism. Position 252–253 (252–253 (NK)) interacts with substrate.

It belongs to the eIF-2B alpha/beta/delta subunits family. MtnA subfamily.

It catalyses the reaction 5-(methylsulfanyl)-alpha-D-ribose 1-phosphate = 5-(methylsulfanyl)-D-ribulose 1-phosphate. Its pathway is amino-acid biosynthesis; L-methionine biosynthesis via salvage pathway; L-methionine from S-methyl-5-thio-alpha-D-ribose 1-phosphate: step 1/6. Functionally, catalyzes the interconversion of methylthioribose-1-phosphate (MTR-1-P) into methylthioribulose-1-phosphate (MTRu-1-P). This chain is Methylthioribose-1-phosphate isomerase, found in Roseiflexus sp. (strain RS-1).